A 1905-amino-acid chain; its full sequence is Alpha-2-macroglobulin (1905 aa).

Positions 1–21 (MNKQYFLSLFSTLAVALTLSG) are cleaved as a signal peptide. C22 is lipidated: N-palmitoyl cysteine. Residue C22 is the site of S-diacylglycerol cysteine attachment. Positions 1438-1441 (CTEQ) form a cross-link, isoglutamyl cysteine thioester (Cys-Gln).

The protein belongs to the protease inhibitor I39 (alpha-2-macroglobulin) family. Bacterial alpha-2-macroglobulin subfamily.

It localises to the cell membrane. In terms of biological role, protects the bacterial cell from host peptidases. The sequence is that of Alpha-2-macroglobulin from Pasteurella multocida (strain Pm70).